Consider the following 509-residue polypeptide: Putative ATP-dependent RNA helicase QP509L (509 aa).

The 153-residue stretch at 110–262 folds into the Helicase ATP-binding domain; the sequence is KKLLPPYGRF…KIIIHHLGQP (153 aa). Residue 123–130 coordinates ATP; that stretch reads LNTGLGKT. Positions 215-218 match the DEAH box motif; the sequence is DEAH.

This sequence belongs to the DEAD box helicase family. DEAH subfamily.

The catalysed reaction is ATP + H2O = ADP + phosphate + H(+). This chain is Putative ATP-dependent RNA helicase QP509L, found in African swine fever virus (isolate Tick/Malawi/Lil 20-1/1983) (ASFV).